The primary structure comprises 124 residues: MNNVLFVALGGSIGAVLRYLISILMLQVFGSGFPFGTLMVNILGSFLMGVVYALGQVSEVSPEIKAFIGVGMLGALTTFSTFSNESLLLMQEGYLVKAILNVVVNVGVCIFVVYLGQQLVFSRY.

4 helical membrane-spanning segments follow: residues 5 to 27 (LFVA…LMLQ), 42 to 62 (ILGS…EVSP), 63 to 83 (EIKA…STFS), and 95 to 115 (LVKA…VVYL). Na(+) contacts are provided by Gly74 and Thr77.

This sequence belongs to the fluoride channel Fluc/FEX (TC 1.A.43) family.

It localises to the cell inner membrane. It catalyses the reaction fluoride(in) = fluoride(out). Its activity is regulated as follows. Na(+) is not transported, but it plays an essential structural role and its presence is essential for fluoride channel function. Fluoride-specific ion channel. Important for reducing fluoride concentration in the cell, thus reducing its toxicity. This is Fluoride-specific ion channel FluC from Shewanella piezotolerans (strain WP3 / JCM 13877).